A 384-amino-acid polypeptide reads, in one-letter code: MGRVAVRTFGVEEELLIADPVDGMPLALASGILDVAGFSETDNSSDAGPSLKSEFKQEQIEVNSLPCRTAKELRAEIRAGRALADSAARAVGARVAALATPPVFHATPTAGNQRYAAMGTEFGLISREQLTCGFHVHVSIESPEEGVAVLDRMRHWLPVLLALSANSPFWMGADTGFASYRTQIWNRWPTAGPMDVFGSADGYRQVLSELLGTGVPLDEGMIYFDARLSRGHPTVEVRIADVCLYAEDALTIAILARALVETSASEWRKGEPPSGVMTPVIRMANWKASRFGVTNQLLHPLEQAPFAAADVAGALLRHIRRALTESGDLALARTGVANILRRGTGERLQRQAYGRRFRLSDVVSTAIASTHNYGERSDAGLLSR.

Belongs to the glutamate--cysteine ligase type 2 family. YbdK subfamily.

It carries out the reaction L-cysteine + L-glutamate + ATP = gamma-L-glutamyl-L-cysteine + ADP + phosphate + H(+). Its function is as follows. ATP-dependent carboxylate-amine ligase which exhibits weak glutamate--cysteine ligase activity. The protein is Putative glutamate--cysteine ligase 2-1 of Paenarthrobacter aurescens (strain TC1).